Reading from the N-terminus, the 239-residue chain is Purine nucleoside phosphorylase DeoD-type (239 aa).

His-5 is a binding site for a purine D-ribonucleoside. Phosphate contacts are provided by Gly-21 and Arg-25. Residue Lys-27 is modified to N6-acetyllysine. Residues Arg-44 and 88-91 (RVGS) contribute to the phosphate site. A purine D-ribonucleoside is bound by residues 180 to 182 (EME) and 204 to 205 (SD). The active-site Proton donor is Asp-205.

This sequence belongs to the PNP/UDP phosphorylase family. In terms of assembly, homohexamer; trimer of homodimers.

It catalyses the reaction a purine D-ribonucleoside + phosphate = a purine nucleobase + alpha-D-ribose 1-phosphate. The enzyme catalyses a purine 2'-deoxy-D-ribonucleoside + phosphate = a purine nucleobase + 2-deoxy-alpha-D-ribose 1-phosphate. Functionally, catalyzes the reversible phosphorolytic breakdown of the N-glycosidic bond in the beta-(deoxy)ribonucleoside molecules, with the formation of the corresponding free purine bases and pentose-1-phosphate. The chain is Purine nucleoside phosphorylase DeoD-type from Escherichia coli O81 (strain ED1a).